Consider the following 472-residue polypeptide: MAPKTIIEKIWDAHTVIGEEGKPSLLYIDLHMVHEVTSPQAFEGLRLAGRPVRRPDLTFATMDHNVPTVDRFNIQDQIARKQIETLEANCKEFGIEIAGLDSPNNGIVHVIGPELGLTQPGKTIVCGDSHTSTHGAFGALAFGIGTSEVEHVLATQTLWQSKPKTMEVRVTGELAPSVSAKDIILAVIAKYGVDFGTGHVIEFTGEAIRSLSMEERMTICNMSIEAGAKAGLISPDSVTFEYLRGRPNAPKGEAFDVAIQQWEALATDAGAVYDRVLTMNASEIEPMVTWGTNPAQGTGVSQVVPSPDDAKDENERRAIKQSLAYMGLEPGTPITEIAIQHVFIGSCTNSRLSDLRTAAELIKGRKVADGVRALVVPGSQQVKRAAEKEGLDEIFKEAGFEWRDSGCSMCLGMNPDTVPEGERCASTSNRNFEGRQGKGARTHLVSPQMAAAAAIAGHFVDVRTFQSEPQTV.

Residues 289-312 (TWGTNPAQGTGVSQVVPSPDDAKD) form a disordered region. Polar residues predominate over residues 290–304 (WGTNPAQGTGVSQVV). 3 residues coordinate [4Fe-4S] cluster: Cys-347, Cys-407, and Cys-410.

It belongs to the aconitase/IPM isomerase family. LeuC type 1 subfamily. In terms of assembly, heterodimer of LeuC and LeuD. It depends on [4Fe-4S] cluster as a cofactor.

The catalysed reaction is (2R,3S)-3-isopropylmalate = (2S)-2-isopropylmalate. Its pathway is amino-acid biosynthesis; L-leucine biosynthesis; L-leucine from 3-methyl-2-oxobutanoate: step 2/4. Functionally, catalyzes the isomerization between 2-isopropylmalate and 3-isopropylmalate, via the formation of 2-isopropylmaleate. The protein is 3-isopropylmalate dehydratase large subunit of Halalkalibacterium halodurans (strain ATCC BAA-125 / DSM 18197 / FERM 7344 / JCM 9153 / C-125) (Bacillus halodurans).